Consider the following 74-residue polypeptide: Cytoplasmic envelopment protein 3 (74 aa).

Gly-2 is lipidated: N-myristoyl glycine; by host. A Di-leucine-like internalization motif motif is present at residues 15-16 (LV). Positions 34–40 (SMEEFDI) are asp/Glu-rich (acidic). Positions 36–74 (EEFDIPPPPPLPKPVFKQPGPYKIPARSQRCPSKRRDPY) are disordered.

Belongs to the herpesviridae cytoplasmic envelopment protein 3 family. As to quaternary structure, interacts with cytoplasmic envelopment protein 2; this interaction is essential for the proper localization of each protein to the assembly complex and thus for the production of infectious virus. In terms of processing, myristoylation and palmitoylation (probably on one or more of the nearby cysteines at the N-terminus) enable membrane-binding and Golgi apparatus-specific targeting and are essential for efficient packaging. Post-translationally, phosphorylated. Phosphorylation does not seem to be required for recycling to the host Golgi apparatus. Packaging is selective for underphosphorylated forms.

The protein resides in the virion tegument. It localises to the virion membrane. The protein localises to the host cell membrane. Its subcellular location is the host Golgi apparatus membrane. Functionally, plays an important role in the cytoplasmic envelopment of tegument proteins and capsids during the assembly and egress processes. Also participates in viral entry at the fusion step probably by regulating the core fusion machinery. The sequence is that of Cytoplasmic envelopment protein 3 from Equine herpesvirus 1 (strain Ab4p) (EHV-1).